Reading from the N-terminus, the 538-residue chain is Mitochondria-eating protein (538 aa).

The segment at 1–273 is interaction with YWHAG/14-3-3 protein gamma; the sequence is MAENLKRLVS…PRSRSCSRSR (273 aa). Ser-85 is modified (phosphoserine). The segment at 97 to 137 is disordered; sequence SKVPSLQDTFDRERHKDPSPRDRDMQQLDSNLNSTRSQCNQ. The span at 105–122 shows a compositional bias: basic and acidic residues; sequence TFDRERHKDPSPRDRDMQ. 2 coiled-coil regions span residues 118–187 and 219–256; these read DRDM…RHRN and DQQDTEAMSDYKKQLRNLKEEIAVLSAEKSALQGRSSR. The segment covering 123–137 has biased composition (polar residues); sequence QLDSNLNSTRSQCNQ. 2 positions are modified to phosphoserine: Ser-156 and Ser-159. 2 disordered regions span residues 173–226 and 247–294; these read QLKS…TEAM and KSAL…SKLS. Positions 181–210 are enriched in basic and acidic residues; sequence EDARHRNTDQRSSENRRSEPWSLEERKREQ. Polar residues predominate over residues 211-224; it reads WNSLKQNADQQDTE. Over residues 253 to 278 the composition is skewed to low complexity; the sequence is RSSRSRSPSPAPRSRSCSRSRSASPS. 2 positions are modified to phosphoserine: Ser-287 and Ser-509.

The protein belongs to the MIEAP family. In terms of assembly, interacts (via coiled-coil domains) with BNIP3L (via BH3 domain). Interacts (via coiled-coil domains) with BNIP3 (via BH3 domain). Interacts with YWHAG/14-3-3 protein gamma; a protein that also plays a role in MALM.

The protein resides in the cytoplasm. It is found in the cytosol. Its subcellular location is the mitochondrion outer membrane. The protein localises to the mitochondrion matrix. In terms of biological role, key regulator of mitochondrial quality that mediates the repairing or degradation of unhealthy mitochondria in response to mitochondrial damage. Mediator of mitochondrial protein catabolic process (also named MALM) by mediating the degradation of damaged proteins inside mitochondria by promoting the accumulation in the mitochondrial matrix of hydrolases that are characteristic of the lysosomal lumen. Also involved in mitochondrion degradation of damaged mitochondria by promoting the formation of vacuole-like structures (named MIV), which engulf and degrade unhealthy mitochondria by accumulating lysosomes. The physical interaction of SPATA18/MIEAP, BNIP3 and BNIP3L/NIX at the mitochondrial outer membrane regulates the opening of a pore in the mitochondrial double membrane in order to mediate the translocation of lysosomal proteins from the cytoplasm to the mitochondrial matrix. Binds cardiolipin. May form molecular condensates (non-membrane-bounded organelles) within mitochondria that compartmentalize and promote cardiolipin metabolism. This is Mitochondria-eating protein (SPATA18) from Homo sapiens (Human).